Consider the following 206-residue polypeptide: Pyrrolidone-carboxylate peptidase (206 aa).

Active-site residues include E76, C139, and H163.

It belongs to the peptidase C15 family. As to quaternary structure, homotetramer.

It localises to the cytoplasm. The enzyme catalyses Release of an N-terminal pyroglutamyl group from a polypeptide, the second amino acid generally not being Pro.. In terms of biological role, removes 5-oxoproline from various penultimate amino acid residues except L-proline. In Pyrococcus horikoshii (strain ATCC 700860 / DSM 12428 / JCM 9974 / NBRC 100139 / OT-3), this protein is Pyrrolidone-carboxylate peptidase (pcp).